We begin with the raw amino-acid sequence, 164 residues long: Cyclic pyranopterin monophosphate synthase (164 aa).

Residues 77–79 (LCH) and 115–116 (ME) each bind substrate. Aspartate 130 is a catalytic residue.

Belongs to the MoaC family. In terms of assembly, homohexamer; trimer of dimers.

The enzyme catalyses (8S)-3',8-cyclo-7,8-dihydroguanosine 5'-triphosphate = cyclic pyranopterin phosphate + diphosphate. It functions in the pathway cofactor biosynthesis; molybdopterin biosynthesis. Its function is as follows. Catalyzes the conversion of (8S)-3',8-cyclo-7,8-dihydroguanosine 5'-triphosphate to cyclic pyranopterin monophosphate (cPMP). This Sinorhizobium medicae (strain WSM419) (Ensifer medicae) protein is Cyclic pyranopterin monophosphate synthase.